The primary structure comprises 310 residues: Nucleotide-binding protein BLA_1368 (310 aa).

The tract at residues 1-21 (MQSARNEQRGTGPESPHAASP) is disordered. 32–39 (GMSGAGRS) contributes to the ATP binding site. A GTP-binding site is contributed by 83 to 86 (DVRS).

Belongs to the RapZ-like family.

In terms of biological role, displays ATPase and GTPase activities. The sequence is that of Nucleotide-binding protein BLA_1368 from Bifidobacterium animalis subsp. lactis (strain AD011).